The sequence spans 418 residues: Serum response factor homolog A (418 aa).

4 disordered regions span residues 14 to 67, 144 to 170, 301 to 351, and 388 to 418; these read LGNV…GKKA, CLNT…LLQQ, RLGK…NNNS, and SSSS…FPPC. Low complexity-rich tracts occupy residues 22–39 and 51–61; these read PSSP…PTST and TSEPSSPSTGE. Residues 67 to 127 form the MADS-box domain; it reads AGRRKIKIEF…GHVYTFATAK (61 aa). Composition is skewed to low complexity over residues 150 to 170, 306 to 351, and 388 to 399; these read NPNS…LLQQ, NNNN…NNNS, and SSSSASSSPASP. Residues 400–418 are compositionally biased toward polar residues; sequence NQFNYSNHSMPLNNQFPPC.

The protein resides in the nucleus. Functionally, required for proper slug migration, spore differentiation and stalk differentiation (under nonbuffered conditions). Could be involved in late events of spore maturation necessary for spore stability. The sequence is that of Serum response factor homolog A (srfA) from Dictyostelium discoideum (Social amoeba).